Consider the following 319-residue polypeptide: MMKVLFIADPMASFKTYKDTTYAMMREMAKRGWRLFHTLSGELSVNGGLVTAQASAFEFLGAKNDDDHAWFKSADKVQTALEAFDAVIMRTDPPFDMQYLYATQLLTLAEQQGAKVFNSGQAMRDFNEKLAILNFSRFIAPTLVTTRSADVRTFLKEHGDIIIKPLDGMGGMGIFRLTEKDPNIGSILETLMQLDSRTIMAQRYIPEIVHGDKRILIIGGEVVPYALARIPQNGETRGNLAAGGRGVAQELGGRDREIAETLAPELKRRGILLAGLDVIGSNLTEVNVTSPTGFQEIMKQKGFDVAAMFADAVAAWSVR.

In terms of domain architecture, ATP-grasp spans lysine 129–alanine 314. Leucine 155–glycine 211 is a binding site for ATP. The Mg(2+) site is built by glutamate 285 and asparagine 287.

Belongs to the prokaryotic GSH synthase family. The cofactor is Mg(2+). Requires Mn(2+) as cofactor.

The catalysed reaction is gamma-L-glutamyl-L-cysteine + glycine + ATP = glutathione + ADP + phosphate + H(+). It participates in sulfur metabolism; glutathione biosynthesis; glutathione from L-cysteine and L-glutamate: step 2/2. The chain is Glutathione synthetase from Neisseria meningitidis serogroup B (strain ATCC BAA-335 / MC58).